The primary structure comprises 87 residues: UPF0250 protein ECA1299 (87 aa).

Belongs to the UPF0250 family.

This is UPF0250 protein ECA1299 from Pectobacterium atrosepticum (strain SCRI 1043 / ATCC BAA-672) (Erwinia carotovora subsp. atroseptica).